A 747-amino-acid chain; its full sequence is NAD(P)H-quinone oxidoreductase subunit 5, chloroplastic (747 aa).

16 consecutive transmembrane segments (helical) span residues 9 to 29, 40 to 60, 89 to 109, 125 to 145, 147 to 167, 185 to 205, 219 to 239, 258 to 278, 280 to 300, 327 to 347, 354 to 374, 396 to 416, 425 to 445, 552 to 572, 606 to 626, and 727 to 747; these read WIIP…LLLF, WAFP…DLSI, IDSL…LVLI, FAYL…SNLI, VYIF…FWFT, GDFG…SLEF, NEVN…GSVA, TPIS…FLVA, LLPF…IGII, LGYM…FHLI, ALLF…VGYS, TAFL…CFWS, WLYS…TAFY, LFSM…GISF, FFTN…IASF, and YILF…SFFI.

Belongs to the complex I subunit 5 family. NDH is composed of at least 16 different subunits, 5 of which are encoded in the nucleus.

It localises to the plastid. The protein localises to the chloroplast thylakoid membrane. It catalyses the reaction a plastoquinone + NADH + (n+1) H(+)(in) = a plastoquinol + NAD(+) + n H(+)(out). It carries out the reaction a plastoquinone + NADPH + (n+1) H(+)(in) = a plastoquinol + NADP(+) + n H(+)(out). In terms of biological role, NDH shuttles electrons from NAD(P)H:plastoquinone, via FMN and iron-sulfur (Fe-S) centers, to quinones in the photosynthetic chain and possibly in a chloroplast respiratory chain. The immediate electron acceptor for the enzyme in this species is believed to be plastoquinone. Couples the redox reaction to proton translocation, and thus conserves the redox energy in a proton gradient. The polypeptide is NAD(P)H-quinone oxidoreductase subunit 5, chloroplastic (ndhF) (Lotus japonicus (Lotus corniculatus var. japonicus)).